The sequence spans 185 residues: Peptide deformylase (185 aa).

2 residues coordinate Fe cation: Cys94 and His136. Glu137 is a catalytic residue. His140 lines the Fe cation pocket.

This sequence belongs to the polypeptide deformylase family. Fe(2+) is required as a cofactor.

The enzyme catalyses N-terminal N-formyl-L-methionyl-[peptide] + H2O = N-terminal L-methionyl-[peptide] + formate. Removes the formyl group from the N-terminal Met of newly synthesized proteins. Requires at least a dipeptide for an efficient rate of reaction. N-terminal L-methionine is a prerequisite for activity but the enzyme has broad specificity at other positions. The chain is Peptide deformylase from Chlorobium limicola (strain DSM 245 / NBRC 103803 / 6330).